We begin with the raw amino-acid sequence, 311 residues long: Putative ABC transporter ATP-binding protein MG467 (311 aa).

The region spanning 84 to 310 (ITINKMWKNV…IVSNQLVRPL (227 aa)) is the ABC transporter domain. 122–129 (GSSGSGKT) contributes to the ATP binding site.

This sequence belongs to the ABC transporter superfamily.

In Mycoplasma genitalium (strain ATCC 33530 / DSM 19775 / NCTC 10195 / G37) (Mycoplasmoides genitalium), this protein is Putative ABC transporter ATP-binding protein MG467.